Consider the following 695-residue polypeptide: DNA ligase (695 aa).

30 to 34 (DADFD) serves as a coordination point for NAD(+). The segment at 52–71 (TGASPTEEVAPAPPTSSPFR) is disordered. Residues 81–82 (SL) and Glu-106 each bind NAD(+). Lys-108 acts as the N6-AMP-lysine intermediate in catalysis. Arg-129, Glu-169, Lys-285, and Lys-309 together coordinate NAD(+). Positions 403, 406, 422, and 428 each coordinate Zn(2+). The BRCT domain occupies 599–688 (VDSALLEGLT…APSSGDDAST (90 aa)). The segment at 676-695 (ENGAPSSGDDASTSADSVDD) is disordered. Low complexity predominate over residues 679 to 695 (APSSGDDASTSADSVDD).

Belongs to the NAD-dependent DNA ligase family. LigA subfamily. Mg(2+) is required as a cofactor. Mn(2+) serves as cofactor.

It carries out the reaction NAD(+) + (deoxyribonucleotide)n-3'-hydroxyl + 5'-phospho-(deoxyribonucleotide)m = (deoxyribonucleotide)n+m + AMP + beta-nicotinamide D-nucleotide.. DNA ligase that catalyzes the formation of phosphodiester linkages between 5'-phosphoryl and 3'-hydroxyl groups in double-stranded DNA using NAD as a coenzyme and as the energy source for the reaction. It is essential for DNA replication and repair of damaged DNA. In Corynebacterium jeikeium (strain K411), this protein is DNA ligase.